The sequence spans 472 residues: Acyltransferase PapA3 (472 aa).

The protein belongs to the PapA acyltransferase family.

The catalysed reaction is a long-chain fatty acyl-CoA + alpha,alpha-trehalose = a 2-O-(long-chain fatty acyl)-alpha,alpha-trehalose + CoA. It catalyses the reaction a mycolipenoyl-CoA + a 2-O-(long-chain fatty acyl)-alpha,alpha-trehalose = a 2-O-(long-chain fatty acyl)-3-O-mycolipenoyl-trehalose + CoA. The enzyme catalyses alpha,alpha-trehalose + hexadecanoyl-CoA = 2-O-hexadecanoyl-alpha,alpha-trehalose + CoA. It carries out the reaction 2-O-hexadecanoyl-alpha,alpha-trehalose + hexadecanoyl-CoA = 2-O,3-O-dihexadecanoyl-alpha,alpha-trehalose + CoA. Its function is as follows. Involved in the biosynthesis of polyacyltrehalose (PAT), a pentaacylated, trehalose-based glycolipid that could have a role in anchoring the bacterial capsule. Catalyzes the sequential transfer of two palmitoyl groups onto a single glucose residue of trehalose generating the diacylated product 2,3-diacyltrehalose (trehalose dipalmitate). In Mycobacterium tuberculosis (strain CDC 1551 / Oshkosh), this protein is Acyltransferase PapA3 (papA3).